Consider the following 452-residue polypeptide: tRNA-2-methylthio-N(6)-dimethylallyladenosine synthase (452 aa).

In terms of domain architecture, MTTase N-terminal spans 3-118 (KKVFIKTYGC…LPQLLAERER (116 aa)). [4Fe-4S] cluster-binding residues include cysteine 12, cysteine 49, cysteine 81, cysteine 155, cysteine 159, and cysteine 162. In terms of domain architecture, Radical SAM core spans 141 to 379 (RVEGASAFVS…QTVINDSIKR (239 aa)). The 64-residue stretch at 382–445 (ESRLGTVQRI…SFTLRGEVVT (64 aa)) folds into the TRAM domain.

The protein belongs to the methylthiotransferase family. MiaB subfamily. As to quaternary structure, monomer. The cofactor is [4Fe-4S] cluster.

It is found in the cytoplasm. It carries out the reaction N(6)-dimethylallyladenosine(37) in tRNA + (sulfur carrier)-SH + AH2 + 2 S-adenosyl-L-methionine = 2-methylsulfanyl-N(6)-dimethylallyladenosine(37) in tRNA + (sulfur carrier)-H + 5'-deoxyadenosine + L-methionine + A + S-adenosyl-L-homocysteine + 2 H(+). Catalyzes the methylthiolation of N6-(dimethylallyl)adenosine (i(6)A), leading to the formation of 2-methylthio-N6-(dimethylallyl)adenosine (ms(2)i(6)A) at position 37 in tRNAs that read codons beginning with uridine. This Albidiferax ferrireducens (strain ATCC BAA-621 / DSM 15236 / T118) (Rhodoferax ferrireducens) protein is tRNA-2-methylthio-N(6)-dimethylallyladenosine synthase.